We begin with the raw amino-acid sequence, 260 residues long: ATP synthase subunit a (260 aa).

Helical transmembrane passes span Phe-37 to Leu-57, Phe-95 to Phe-115, Ile-125 to Val-145, Val-154 to Ile-174, Met-191 to Met-211, and Glu-233 to His-253.

It belongs to the ATPase A chain family. F-type ATPases have 2 components, CF(1) - the catalytic core - and CF(0) - the membrane proton channel. CF(1) has five subunits: alpha(3), beta(3), gamma(1), delta(1), epsilon(1). CF(0) has three main subunits: a(1), b(2) and c(9-12). The alpha and beta chains form an alternating ring which encloses part of the gamma chain. CF(1) is attached to CF(0) by a central stalk formed by the gamma and epsilon chains, while a peripheral stalk is formed by the delta and b chains.

Its subcellular location is the cell inner membrane. Key component of the proton channel; it plays a direct role in the translocation of protons across the membrane. The polypeptide is ATP synthase subunit a (Parvibaculum lavamentivorans (strain DS-1 / DSM 13023 / NCIMB 13966)).